Reading from the N-terminus, the 269-residue chain is Hydroxyethylthiazole kinase (269 aa).

A substrate-binding site is contributed by methionine 45. ATP contacts are provided by arginine 121 and threonine 167. Glycine 194 is a substrate binding site.

The protein belongs to the Thz kinase family. The cofactor is Mg(2+).

It catalyses the reaction 5-(2-hydroxyethyl)-4-methylthiazole + ATP = 4-methyl-5-(2-phosphooxyethyl)-thiazole + ADP + H(+). It functions in the pathway cofactor biosynthesis; thiamine diphosphate biosynthesis; 4-methyl-5-(2-phosphoethyl)-thiazole from 5-(2-hydroxyethyl)-4-methylthiazole: step 1/1. Functionally, catalyzes the phosphorylation of the hydroxyl group of 4-methyl-5-beta-hydroxyethylthiazole (THZ). This chain is Hydroxyethylthiazole kinase, found in Bacillus cytotoxicus (strain DSM 22905 / CIP 110041 / 391-98 / NVH 391-98).